The primary structure comprises 120 residues: Large ribosomal subunit protein uL18 (120 aa).

The protein belongs to the universal ribosomal protein uL18 family. As to quaternary structure, part of the 50S ribosomal subunit; part of the 5S rRNA/L5/L18/L25 subcomplex. Contacts the 5S and 23S rRNAs.

This is one of the proteins that bind and probably mediate the attachment of the 5S RNA into the large ribosomal subunit, where it forms part of the central protuberance. The chain is Large ribosomal subunit protein uL18 from Treponema pallidum (strain Nichols).